An 861-amino-acid chain; its full sequence is Cone cGMP-specific 3',5'-cyclic phosphodiesterase subunit alpha' (861 aa).

GAF domains are found at residues 75–224 (SAEQ…AVAL) and 256–433 (DVER…GWSL). 3',5'-cyclic GMP contacts are provided by residues serine 97, asparagine 116, 169–172 (DKQT), and threonine 176. Residues 486 to 819 (EERQLLAILK…VEWKSLAEEY (334 aa)) form the PDEase domain. Catalysis depends on histidine 562, which acts as the Proton donor. Residues histidine 566, histidine 602, aspartate 603, and aspartate 723 each contribute to the a divalent metal cation site. A compositionally biased stretch (basic and acidic residues) spans 826–839 (TEEEAGKQEEEASD). The segment at 826–861 (TEEEAGKQEEEASDGKAATDLGGSAEDKKSKTCLML) is disordered. Position 858 is a cysteine methyl ester (cysteine 858). A lipid anchor (S-geranylgeranyl cysteine) is attached at cysteine 858. A propeptide spans 859-861 (LML) (removed in mature form).

This sequence belongs to the cyclic nucleotide phosphodiesterase family. Composed of two alpha' subunits that are associated with 3 smaller proteins of 11, 13, and 15 kDa. It depends on a divalent metal cation as a cofactor.

The protein localises to the cell membrane. The enzyme catalyses 3',5'-cyclic GMP + H2O = GMP + H(+). In terms of biological role, as cone-specific cGMP phosphodiesterase, it plays an essential role in light detection and cone phototransduction by rapidly decreasing intracellular levels of cGMP. The polypeptide is Cone cGMP-specific 3',5'-cyclic phosphodiesterase subunit alpha' (Pde6c) (Mus musculus (Mouse)).